Reading from the N-terminus, the 258-residue chain is Acyl-[acyl-carrier-protein]--UDP-N-acetylglucosamine O-acyltransferase (258 aa).

Belongs to the transferase hexapeptide repeat family. LpxA subfamily. In terms of assembly, homotrimer.

The protein resides in the cytoplasm. The enzyme catalyses a (3R)-hydroxyacyl-[ACP] + UDP-N-acetyl-alpha-D-glucosamine = a UDP-3-O-[(3R)-3-hydroxyacyl]-N-acetyl-alpha-D-glucosamine + holo-[ACP]. It functions in the pathway glycolipid biosynthesis; lipid IV(A) biosynthesis; lipid IV(A) from (3R)-3-hydroxytetradecanoyl-[acyl-carrier-protein] and UDP-N-acetyl-alpha-D-glucosamine: step 1/6. Functionally, involved in the biosynthesis of lipid A, a phosphorylated glycolipid that anchors the lipopolysaccharide to the outer membrane of the cell. This chain is Acyl-[acyl-carrier-protein]--UDP-N-acetylglucosamine O-acyltransferase, found in Pseudomonas fluorescens (strain Pf0-1).